Reading from the N-terminus, the 222-residue chain is Formimidoylglutamase (222 aa).

Mn(2+) contacts are provided by H34, D59, H61, D63, D150, and D152.

This sequence belongs to the arginase family. Mn(2+) is required as a cofactor.

The enzyme catalyses N-formimidoyl-L-glutamate + H2O = formamide + L-glutamate. It participates in amino-acid degradation; L-histidine degradation into L-glutamate; L-glutamate from N-formimidoyl-L-glutamate (hydrolase route): step 1/1. In terms of biological role, catalyzes the conversion of N-formimidoyl-L-glutamate to L-glutamate and formamide. This is Formimidoylglutamase (hutG) from Klebsiella aerogenes (Enterobacter aerogenes).